The following is a 287-amino-acid chain: Ferredoxin-type protein NapH (287 aa).

Topologically, residues 1–29 (MANRKRDAGREALEKKGWWRSHRWLVLRR) are cytoplasmic. A helical transmembrane segment spans residues 30–50 (LCQFFVLGMFLSGPWFGVWIL). Topologically, residues 51-79 (HGNYSSSLLFDTVPLTDPLMTLQSLASGH) are periplasmic. Residues 80-100 (LPATVALTGAVIITVLYALAG) form a helical membrane-spanning segment. Residues 101-139 (KRLFCSWVCPLNPITDLANWLRRRFDLNQSATIPRHIRY) are Cytoplasmic-facing. A helical membrane pass occupies residues 140–160 (VLLVVILVGSALTGTLIWEWI). The Periplasmic segment spans residues 161-170 (NPVSLMGRSL). The chain crosses the membrane as a helical span at residues 171–191 (VMGFGSGALLILALFLFDLLV). The Cytoplasmic portion of the chain corresponds to 192–287 (VEHGWCGHIC…TTRWSSGAKS (96 aa)). 2 consecutive 4Fe-4S ferredoxin-type domains span residues 217 to 247 (TVAA…APVL) and 251 to 280 (SPVQ…ITTR). Positions 226, 229, 232, 236, 260, 263, 266, and 270 each coordinate [4Fe-4S] cluster.

In terms of assembly, interacts with NapC. [4Fe-4S] cluster serves as cofactor.

Its subcellular location is the cell inner membrane. Its function is as follows. Required for electron transfer from ubiquinol, via NapC, to the periplasmic nitrate reductase NapAB complex. The protein is Ferredoxin-type protein NapH (napH) of Escherichia coli (strain K12).